A 374-amino-acid polypeptide reads, in one-letter code: Pre-B-cell leukemia transcription factor 4 (374 aa).

Residues 14 to 209 form the PBC domain; it reads PRRLDTSDVL…VMTLRSRLLD (196 aa). A PBC-A region spans residues 21–100; the sequence is DVLQQIMAIT…EGVCRPEKRG (80 aa). Positions 103 to 209 are PBC-B; sequence GAVARAGTAT…VMTLRSRLLD (107 aa). The segment at residues 210-272 is a DNA-binding region (homeobox; TALE-type); it reads ARRKRRNFSK…NKRIRYKKNM (63 aa). Residues 333–374 are disordered; it reads QPPPGGGCLQSQAQGSWQGATPQPATASPAGDPGSINSSTSN. Polar residues predominate over residues 341 to 358; the sequence is LQSQAQGSWQGATPQPAT.

Belongs to the TALE/PBX homeobox family.

Its subcellular location is the nucleus. The sequence is that of Pre-B-cell leukemia transcription factor 4 (PBX4) from Homo sapiens (Human).